The primary structure comprises 161 residues: Arginine repressor (161 aa).

Belongs to the ArgR family.

Its subcellular location is the cytoplasm. It functions in the pathway amino-acid biosynthesis; L-arginine biosynthesis [regulation]. Functionally, regulates arginine biosynthesis genes. The protein is Arginine repressor of Corynebacterium aurimucosum (strain ATCC 700975 / DSM 44827 / CIP 107346 / CN-1) (Corynebacterium nigricans).